Consider the following 326-residue polypeptide: tRNA-modifying protein YgfZ (326 aa).

Folate-binding residues include tryptophan 27 and tryptophan 189.

It belongs to the tRNA-modifying YgfZ family.

It is found in the cytoplasm. Folate-binding protein involved in regulating the level of ATP-DnaA and in the modification of some tRNAs. It is probably a key factor in regulatory networks that act via tRNA modification, such as initiation of chromosomal replication. This Escherichia coli O139:H28 (strain E24377A / ETEC) protein is tRNA-modifying protein YgfZ.